A 64-amino-acid polypeptide reads, in one-letter code: Beta-insect depressant toxin BmKIT4 (64 aa).

The LCN-type CS-alpha/beta domain maps to 1–61; that stretch reads DGYIRGSNGC…TWKSESNTCG (61 aa). Cystine bridges form between Cys10–Cys60, Cys14–Cys35, Cys21–Cys42, and Cys25–Cys44. Position 60 is a cysteine amide (Cys60).

The protein belongs to the long (4 C-C) scorpion toxin superfamily. Sodium channel inhibitor family. Beta subfamily. As to expression, expressed by the venom gland.

The protein localises to the secreted. Depressant insect beta-toxins cause a transient contraction paralysis followed by a slow flaccid paralysis. They bind voltage-independently at site-4 of sodium channels (Nav) and shift the voltage of activation toward more negative potentials thereby affecting sodium channel activation and promoting spontaneous and repetitive firing. This toxin is active only on insects. In Olivierus martensii (Manchurian scorpion), this protein is Beta-insect depressant toxin BmKIT4.